The chain runs to 278 residues: 2-(acetamidomethylene)succinate hydrolase (278 aa).

Chloride contacts are provided by residues I41 and 106-107 (SL). The active-site Nucleophile is S106. Active-site residues include D130 and H258.

This sequence belongs to the AB hydrolase superfamily. Homodimer.

It carries out the reaction 2-(acetamidomethylene)succinate + 2 H2O + H(+) = succinate semialdehyde + acetate + NH4(+) + CO2. Its pathway is cofactor degradation; B6 vitamer degradation. Functionally, catalyzes the final reaction in the degradation of vitamin B6 from (E)-2-(acetamidomethylene)succinate (E-2AMS) to produce succinic semialdehyde, acetate, ammonia and carbon dioxide. This Mesorhizobium japonicum (strain LMG 29417 / CECT 9101 / MAFF 303099) (Mesorhizobium loti (strain MAFF 303099)) protein is 2-(acetamidomethylene)succinate hydrolase.